We begin with the raw amino-acid sequence, 185 residues long: MELVVTSRETDKKSLLKKIRQTGGIPAVIYSGGKSLANIVVDAHVFGKFLSSLESGALSSTIFSLSYEGRTIKALVKDIQYQVTSYRVIHLDFEELIEDRDVKLNIPIRCINAVDCVGVKLGGSLRQVIRAMRVVCKPKDIVPCLELDVRSLGLSQTRKLADINIPAGLRPITPLKEVVVTVSRR.

This sequence belongs to the bacterial ribosomal protein bL25 family. CTC subfamily. Part of the 50S ribosomal subunit; part of the 5S rRNA/L5/L18/L25 subcomplex. Contacts the 5S rRNA. Binds to the 5S rRNA independently of L5 and L18.

In terms of biological role, this is one of the proteins that binds to the 5S RNA in the ribosome where it forms part of the central protuberance. The chain is Large ribosomal subunit protein bL25 from Chlamydia caviae (strain ATCC VR-813 / DSM 19441 / 03DC25 / GPIC) (Chlamydophila caviae).